The sequence spans 640 residues: MPIITLPDGSQRSFDHPVSVAEVAQSIGAGLAKATLAGKVDGRLVDACDTIERDATLQIITPKDEEGLEIIRHSCAHLVGHAVKQLYPTAKMVIGPVIEEGFYYDIFFERPFTPEDMAAIQQRMRELIDKDYDVIKKMTPRAEVIELFKSRGEDYKLRLIDDMPDEKAMGLYFHEEYVDMCRGPHVPNTRFLKAFQLTKISGAYWRGDSKNEQLQRIYGTAWADKKQLAAYIQRIEEAEKRDHRRIGKQLDLFHLQEEAPGMVFWHPNGWSVYQVLEQYMRKVQRDHGYVEVRTPQVVDRILWERSGHWSNYAENMFTTASESRDYAVKPMNCPCHVQIFNQGLKSYRDLPLRLAEFGACHRNEPSGALHGIMRVRGFTQDDAHIFCTEEQVKKEAADFIKLTLQVYRDFGFTDIAMKLSTRPAKRVGSDELWDRAEGALADALNESGLAWEYQPGEGAFYGPKIEFTLKDCLGRNWQCGTLQYDPNLPERLDASYIAEDNNRKRPVMLHRAILGSFERFIGMLIEHYAGAFPAWLAPTQAVVMNITDKQADFAAEVVRILGESGFRAKSDLRNEKIGFKIREHTLLKVPYLLVIGDREVESKAVAVRTREGEDLGSMPVTQFAELLAQAVSRRGRQDSE.

One can recognise a TGS domain in the interval 1-61 (MPIITLPDGS…ERDATLQIIT (61 aa)). The tract at residues 242–533 (DHRRIGKQLD…LIEHYAGAFP (292 aa)) is catalytic. Residues Cys333, His384, and His510 each coordinate Zn(2+).

The protein belongs to the class-II aminoacyl-tRNA synthetase family. In terms of assembly, homodimer. It depends on Zn(2+) as a cofactor.

It localises to the cytoplasm. It carries out the reaction tRNA(Thr) + L-threonine + ATP = L-threonyl-tRNA(Thr) + AMP + diphosphate + H(+). Its function is as follows. Catalyzes the attachment of threonine to tRNA(Thr) in a two-step reaction: L-threonine is first activated by ATP to form Thr-AMP and then transferred to the acceptor end of tRNA(Thr). Also edits incorrectly charged L-seryl-tRNA(Thr). This is Threonine--tRNA ligase from Pseudomonas paraeruginosa (strain DSM 24068 / PA7) (Pseudomonas aeruginosa (strain PA7)).